We begin with the raw amino-acid sequence, 307 residues long: 4-diphosphocytidyl-2-C-methyl-D-erythritol kinase (307 aa).

Residue lysine 14 is part of the active site. 107–117 (PVAGGMAGGSA) contacts ATP. Residue aspartate 149 is part of the active site.

Belongs to the GHMP kinase family. IspE subfamily.

The enzyme catalyses 4-CDP-2-C-methyl-D-erythritol + ATP = 4-CDP-2-C-methyl-D-erythritol 2-phosphate + ADP + H(+). The protein operates within isoprenoid biosynthesis; isopentenyl diphosphate biosynthesis via DXP pathway; isopentenyl diphosphate from 1-deoxy-D-xylulose 5-phosphate: step 3/6. Its function is as follows. Catalyzes the phosphorylation of the position 2 hydroxy group of 4-diphosphocytidyl-2C-methyl-D-erythritol. The protein is 4-diphosphocytidyl-2-C-methyl-D-erythritol kinase of Thermobifida fusca (strain YX).